Consider the following 127-residue polypeptide: Fluoride-specific ion channel FluC (127 aa).

4 consecutive transmembrane segments (helical) span residues 4 to 24 (SILAIALGAALGALLRWFLGL), 36 to 56 (GTLLANLVGGYAIGAAIAYFA), 68 to 88 (LIITGFCGGLTTFSTFSAEVV), and 99 to 119 (AAGAIATHVGGSLLMTLLGLF). The Na(+) site is built by Gly-75 and Thr-78.

The protein belongs to the fluoride channel Fluc/FEX (TC 1.A.43) family.

The protein resides in the cell inner membrane. The enzyme catalyses fluoride(in) = fluoride(out). With respect to regulation, na(+) is not transported, but it plays an essential structural role and its presence is essential for fluoride channel function. Its function is as follows. Fluoride-specific ion channel. Important for reducing fluoride concentration in the cell, thus reducing its toxicity. The polypeptide is Fluoride-specific ion channel FluC (Pseudomonas paraeruginosa (strain DSM 24068 / PA7) (Pseudomonas aeruginosa (strain PA7))).